Reading from the N-terminus, the 115-residue chain is Tyrosine-protein phosphatase 21 (115 aa).

A Tyrosine-protein phosphatase domain is found at 1–115 (WLMIVEKECR…EIGGDAPMVV (115 aa)). Residue Asp83 participates in substrate binding.

The protein belongs to the protein-tyrosine phosphatase family.

The catalysed reaction is O-phospho-L-tyrosyl-[protein] + H2O = L-tyrosyl-[protein] + phosphate. The polypeptide is Tyrosine-protein phosphatase 21 (STY-21) (Styela plicata (Wrinkled sea squirt)).